The sequence spans 928 residues: G-protein coupled receptor family C group 6 member A (928 aa).

Residues methionine 1 to serine 20 form the signal peptide. Residues cysteine 21–alanine 594 lie on the Extracellular side of the membrane. N-linked (GlcNAc...) asparagine glycans are attached at residues asparagine 332 and asparagine 555. Residues leucine 595 to phenylalanine 615 traverse the membrane as a helical segment. The Cytoplasmic segment spans residues threonine 616 to leucine 630. A helical membrane pass occupies residues valine 631 to isoleucine 651. At glycine 652 to serine 669 the chain is on the extracellular side. The chain crosses the membrane as a helical span at residues phenylalanine 670–phenylalanine 690. Residues aspartate 691–proline 706 are Cytoplasmic-facing. A helical transmembrane segment spans residues isoleucine 707–alanine 727. The Extracellular portion of the chain corresponds to proline 728–leucine 750. A helical transmembrane segment spans residues alanine 751–phenylalanine 771. Residues lysine 772–lysine 784 lie on the Cytoplasmic side of the membrane. Residues phenylalanine 785 to alanine 805 traverse the membrane as a helical segment. The Extracellular portion of the chain corresponds to threonine 806–leucine 812. Residues proline 813–phenylalanine 833 form a helical membrane-spanning segment. Over proline 834 to isoleucine 928 the chain is Cytoplasmic.

Belongs to the G-protein coupled receptor 3 family. Homodimer; disulfide-linked. In terms of processing, N-glycosylated. In terms of tissue distribution, high expression in soft palate. Weak expression in kidney, liver, lung and brain. No expression detected in heart, testis, skeletal muscle amd spleen.

The protein resides in the cell membrane. Its function is as follows. Receptor activated by multiple ligands, including osteocalcin (BGLAP), basic amino acids, and various cations. Activated by amino acids with a preference for basic amino acids such as L-Lys, L-Arg and L-ornithine but also by small and polar amino acids. The L-alpha amino acids respond is augmented by divalent cations Ca(2+) and Mg(2+). Seems to act through a G(q)/G(11) and G(i)-coupled pathway. Regulates testosterone production by acting as a ligand for uncarboxylated osteocalcin hormone: osteocalcin-binding at the surface of Leydig cells initiates a signaling response that promotes the expression of enzymes required for testosterone synthesis in a CREB-dependent manner. Mediates the non-genomic effects of androgens in multiple tissue. May coordinate nutritional and hormonal anabolic signals through the sensing of extracellular amino acids, osteocalcin, divalent ions and its responsiveness to anabolic steroids. The polypeptide is G-protein coupled receptor family C group 6 member A (Gprc6a) (Rattus norvegicus (Rat)).